Consider the following 952-residue polypeptide: Glutamate receptor 2.7 (952 aa).

The N-terminal stretch at 1–32 is a signal peptide; sequence MKVMNPRKTNNTFMYYFVLFVCGFVLMEGCLG. The Extracellular portion of the chain corresponds to 33–582; it reads QNQTTEIKVG…NTWVFLRPWS (550 aa). Residues Asn-34, Asn-60, Asn-355, Asn-428, and Asn-546 are each glycosylated (N-linked (GlcNAc...) asparagine). A helical membrane pass occupies residues 583-603; the sequence is LDLWVTTACFFVFIGFIVWIL. At 604 to 612 the chain is on the cytoplasmic side; that stretch reads EHRVNTDFR. A helical membrane pass occupies residues 613–633; it reads GPPHHQIGTSFWFAFSTMNFA. The Cytoplasmic portion of the chain corresponds to 634–637; that stretch reads HREK. The helical transmembrane segment at 638–658 threads the bilayer; that stretch reads VVSNLARFVVLVWCFVVLVLI. Over 659–821 the chain is Extracellular; sequence QSYTANLTSF…LSSNHLSLSS (163 aa). N-linked (GlcNAc...) asparagine glycosylation is found at Asn-664, Asn-728, Asn-748, Asn-784, and Asn-809. A helical membrane pass occupies residues 822–842; sequence FWGLFLIAGIASFLALLIFVA. Over 843–952 the chain is Cytoplasmic; the sequence is NFLYEHKHTL…ESAIIQCEGE (110 aa). Residues 889-908 are compositionally biased toward polar residues; the sequence is VSSPITQGSSSPLTDQSTPL. 2 disordered regions span residues 889–914 and 932–952; these read VSSP…SPEQ and FTTQ…CEGE.

Belongs to the glutamate-gated ion channel (TC 1.A.10.1) family. In terms of assembly, may form heteromers. As to expression, expressed predominantly in leaves.

The protein resides in the membrane. Its function is as follows. Glutamate-gated receptor that probably acts as a non-selective cation channel. May be involved in light-signal transduction and calcium homeostasis via the regulation of calcium influx into cells. The protein is Glutamate receptor 2.7 (GLR2.7) of Arabidopsis thaliana (Mouse-ear cress).